The following is a 472-amino-acid chain: Ras-GEF domain-containing family member 1B (472 aa).

Positions histidine 34–alanine 164 constitute an N-terminal Ras-GEF domain. The Ras-GEF domain occupies aspartate 204 to proline 452.

In terms of assembly, interacts with CCDC124 during cytokinesis. Interacts with Ras family proteins.

It is found in the early endosome. The protein localises to the late endosome. The protein resides in the midbody. Guanine nucleotide exchange factor (GEF) with specificity for RAP2A, it doesn't seems to activate other Ras family proteins (in vitro). This is Ras-GEF domain-containing family member 1B (RASGEF1B) from Pongo abelii (Sumatran orangutan).